The chain runs to 1239 residues: Inner tegument protein (1239 aa).

The span at 1 to 10 (MASAMESDSS) shows a compositional bias: low complexity. Disordered stretches follow at residues 1–20 (MASA…DAQP), 672–708 (GESP…GGPW), and 1090–1239 (GRNA…AEDE). An interaction with large tegument protein region spans residues 618 to 1239 (NELPKTRSLA…RPPRPTAEDE (622 aa)). Over residues 1115–1126 (DSSPFSFSSSDF) the composition is skewed to low complexity. The segment covering 1127–1136 (SDQDEGEGGE) has biased composition (acidic residues). A compositionally biased stretch (low complexity) spans 1181–1190 (RTTPSPSRRA). Over residues 1219–1232 (VRPRTRRGATRRPP) the composition is skewed to basic residues.

This sequence belongs to the herpesviridae inner tegument protein family. As to quaternary structure, interacts (via C-terminus) with the large tegument protein/LTP (via N-terminus).

Its subcellular location is the virion tegument. The protein localises to the host cytoplasm. It is found in the host nucleus. It localises to the host Golgi apparatus. The protein resides in the host trans-Golgi network. Its function is as follows. Plays an essential role in cytoplasmic secondary envelopment during viral egress. Interacts with the capsid via the large tegument protein/LTP and participates in its transport to the host trans-Golgi network (TGN) where secondary envelopment occurs. Modulates tegumentation and capsid accumulation at the viral assembly complex. In Homo sapiens (Human), this protein is Inner tegument protein.